The primary structure comprises 496 residues: Protein RepS (496 aa).

The DNA-binding element occupies 120-141 (SDILTTAIDLGFMPTLIIKSDK).

In terms of biological role, essential for replication. The sequence is that of Protein RepS (repS) from Streptococcus pyogenes.